A 240-amino-acid polypeptide reads, in one-letter code: Ribonuclease PH (240 aa).

Phosphate is bound by residues Arg-86 and 124–126; that span reads GTR.

This sequence belongs to the RNase PH family. In terms of assembly, homohexameric ring arranged as a trimer of dimers.

It catalyses the reaction tRNA(n+1) + phosphate = tRNA(n) + a ribonucleoside 5'-diphosphate. In terms of biological role, phosphorolytic 3'-5' exoribonuclease that plays an important role in tRNA 3'-end maturation. Removes nucleotide residues following the 3'-CCA terminus of tRNAs; can also add nucleotides to the ends of RNA molecules by using nucleoside diphosphates as substrates, but this may not be physiologically important. Probably plays a role in initiation of 16S rRNA degradation (leading to ribosome degradation) during starvation. This Rickettsia prowazekii (strain Madrid E) protein is Ribonuclease PH.